A 358-amino-acid polypeptide reads, in one-letter code: Membrane-bound lytic murein transglycosylase C (358 aa).

An N-terminal signal peptide occupies residues 1-16 (MKKILALLVIAPLLVS). Residue Cys17 is the site of N-palmitoyl cysteine attachment. Cys17 carries the S-diacylglycerol cysteine lipid modification.

It belongs to the transglycosylase Slt family.

The protein resides in the cell outer membrane. It carries out the reaction Exolytic cleavage of the (1-&gt;4)-beta-glycosidic linkage between N-acetylmuramic acid (MurNAc) and N-acetylglucosamine (GlcNAc) residues in peptidoglycan, from either the reducing or the non-reducing ends of the peptidoglycan chains, with concomitant formation of a 1,6-anhydrobond in the MurNAc residue.. In terms of biological role, murein-degrading enzyme. May play a role in recycling of muropeptides during cell elongation and/or cell division. In Yersinia enterocolitica serotype O:8 / biotype 1B (strain NCTC 13174 / 8081), this protein is Membrane-bound lytic murein transglycosylase C.